A 442-amino-acid polypeptide reads, in one-letter code: Elongation factor 1-gamma (442 aa).

The region spanning 2 to 87 (AAGTLYTYPE…YLSNDVLRGS (86 aa)) is the GST N-terminal domain. One can recognise a GST C-terminal domain in the interval 88 to 216 (TPQASAQVLQ…VKLCEKMAQF (129 aa)). Basic and acidic residues-rich tracts occupy residues 227–242 (KKEAPIKKEKGGKEGG) and 249–263 (QEKKEKKKEEKKAAP). The interval 227–273 (KKEAPIKKEKGGKEGGKQQPQQQEKKEKKKEEKKAAPAEEEMDECEA) is disordered. An EF-1-gamma C-terminal domain is found at 281-442 (AKDPFAHLPK…KPFNQGKIFK (162 aa)).

In terms of assembly, EF-1 is composed of four subunits: alpha, beta, delta, and gamma.

Its function is as follows. Probably plays a role in anchoring the complex to other cellular components. This Danio rerio (Zebrafish) protein is Elongation factor 1-gamma (eef1g).